A 451-amino-acid polypeptide reads, in one-letter code: tRNA modification GTPase MnmE (451 aa).

(6S)-5-formyl-5,6,7,8-tetrahydrofolate contacts are provided by Arg28, Glu85, and Lys124. A TrmE-type G domain is found at 220–373; that stretch reads GLYTVLVGPP…LKTRLRTLLL (154 aa). Asn230 is a K(+) binding site. Residues 230 to 235, 249 to 255, and 274 to 277 contribute to the GTP site; these read NVGKSS, TDVPGTT, and DTAG. Ser234 serves as a coordination point for Mg(2+). Residues Thr249, Val251, and Thr254 each contribute to the K(+) site. Position 255 (Thr255) interacts with Mg(2+). A (6S)-5-formyl-5,6,7,8-tetrahydrofolate-binding site is contributed by Lys451.

The protein belongs to the TRAFAC class TrmE-Era-EngA-EngB-Septin-like GTPase superfamily. TrmE GTPase family. Homodimer. Heterotetramer of two MnmE and two MnmG subunits. It depends on K(+) as a cofactor.

The protein resides in the cytoplasm. Exhibits a very high intrinsic GTPase hydrolysis rate. Involved in the addition of a carboxymethylaminomethyl (cmnm) group at the wobble position (U34) of certain tRNAs, forming tRNA-cmnm(5)s(2)U34. This Xylella fastidiosa (strain 9a5c) protein is tRNA modification GTPase MnmE.